We begin with the raw amino-acid sequence, 445 residues long: Tubulin beta-2 chain (445 aa).

Positions 11, 69, 138, 142, 143, 144, 204, and 226 each coordinate GTP. Glu-69 contacts Mg(2+). The segment at Gln-424–Ala-445 is disordered. Residues Thr-429–Ala-445 are compositionally biased toward acidic residues.

This sequence belongs to the tubulin family. Dimer of alpha and beta chains. A typical microtubule is a hollow water-filled tube with an outer diameter of 25 nm and an inner diameter of 15 nM. Alpha-beta heterodimers associate head-to-tail to form protofilaments running lengthwise along the microtubule wall with the beta-tubulin subunit facing the microtubule plus end conferring a structural polarity. Microtubules usually have 13 protofilaments but different protofilament numbers can be found in some organisms and specialized cells. It depends on Mg(2+) as a cofactor.

Its subcellular location is the cytoplasm. The protein resides in the cytoskeleton. Functionally, tubulin is the major constituent of microtubules, a cylinder consisting of laterally associated linear protofilaments composed of alpha- and beta-tubulin heterodimers. Microtubules grow by the addition of GTP-tubulin dimers to the microtubule end, where a stabilizing cap forms. Below the cap, tubulin dimers are in GDP-bound state, owing to GTPase activity of alpha-tubulin. The sequence is that of Tubulin beta-2 chain (TUB-2) from Echinococcus multilocularis (Fox tapeworm).